Consider the following 300-residue polypeptide: GTPase Era (300 aa).

The region spanning 7-182 is the Era-type G domain; that stretch reads YCGFIAIVGR…LRKGVHHFPE (176 aa). Residues 15–22 are G1; that stretch reads GRPNVGKS. 15 to 22 contacts GTP; sequence GRPNVGKS. Residues 41–45 are G2; sequence QTTRH. The G3 stretch occupies residues 62 to 65; the sequence is DTPG. GTP is bound by residues 62 to 66 and 124 to 127; these read DTPGL and NKVD. The tract at residues 124–127 is G4; sequence NKVD. Positions 154 to 156 are G5; the sequence is ISA. Positions 206-283 constitute a KH type-2 domain; the sequence is TGEELPYSVT…HLELWVKVKS (78 aa).

The protein belongs to the TRAFAC class TrmE-Era-EngA-EngB-Septin-like GTPase superfamily. Era GTPase family. Monomer.

The protein localises to the cytoplasm. The protein resides in the cell inner membrane. Functionally, an essential GTPase that binds both GDP and GTP, with rapid nucleotide exchange. Plays a role in 16S rRNA processing and 30S ribosomal subunit biogenesis and possibly also in cell cycle regulation and energy metabolism. This chain is GTPase Era, found in Histophilus somni (strain 129Pt) (Haemophilus somnus).